Here is a 115-residue protein sequence, read N- to C-terminus: Histidine decarboxylase proenzyme (115 aa).

The residue at position 83 (Ser-83) is a Pyruvic acid (Ser).

In terms of assembly, the proenzyme is a hexamer of identical pi chains; each pi chain monomer is cleaved to form a small (or beta) chain and a large (or alpha) chain by non-hydrolytic self-catalysis. The cofactor is pyruvate.

The enzyme catalyses L-histidine + H(+) = histamine + CO2. This chain is Histidine decarboxylase proenzyme, found in Lentilactobacillus buchneri (Lactobacillus buchneri).